The following is a 118-amino-acid chain: UPF0058 protein MJ1132 (118 aa).

It belongs to the UPF0058 family.

The chain is UPF0058 protein MJ1132 from Methanocaldococcus jannaschii (strain ATCC 43067 / DSM 2661 / JAL-1 / JCM 10045 / NBRC 100440) (Methanococcus jannaschii).